A 229-amino-acid chain; its full sequence is Potassium/proton antiporter CemA (229 aa).

4 consecutive transmembrane segments (helical) span residues 7-27, 107-127, 154-174, and 189-209; these read FNPLLYLTSIVFLSWSISFSF, ILNFLTNIISFAILSVFYILG, ILLLTDLCIGFHSPHGWELMI, and IISGLVSTFPVILDTIFKYLI.

This sequence belongs to the CemA family.

Its subcellular location is the plastid. It localises to the chloroplast inner membrane. The enzyme catalyses K(+)(in) + H(+)(out) = K(+)(out) + H(+)(in). Its function is as follows. Contributes to K(+)/H(+) antiport activity by supporting proton efflux to control proton extrusion and homeostasis in chloroplasts in a light-dependent manner to modulate photosynthesis. Prevents excessive induction of non-photochemical quenching (NPQ) under continuous-light conditions. Indirectly promotes efficient inorganic carbon uptake into chloroplasts. This chain is Potassium/proton antiporter CemA, found in Ranunculus macranthus (Large buttercup).